Consider the following 208-residue polypeptide: uncharacterized protein (208 aa).

This is an uncharacterized protein from Ureaplasma parvum serovar 3 (strain ATCC 700970).